The primary structure comprises 397 residues: Putative teichuronic acid biosynthesis glycosyltransferase TuaH (397 aa).

The protein belongs to the glycosyltransferase group 1 family.

It participates in cell wall biogenesis; teichuronic acid biosynthesis. This is Putative teichuronic acid biosynthesis glycosyltransferase TuaH (tuaH) from Bacillus subtilis (strain 168).